Reading from the N-terminus, the 278-residue chain is Large ribosomal subunit protein uL2 (278 aa).

The tract at residues 223 to 278 (GVAMNPIDHPHGGGEGRTSGGRHPVTPWGFPTKGKKTRSNKRTDTFIVSSRHNRKK) is disordered.

It belongs to the universal ribosomal protein uL2 family. Part of the 50S ribosomal subunit. Forms a bridge to the 30S subunit in the 70S ribosome.

In terms of biological role, one of the primary rRNA binding proteins. Required for association of the 30S and 50S subunits to form the 70S ribosome, for tRNA binding and peptide bond formation. It has been suggested to have peptidyltransferase activity; this is somewhat controversial. Makes several contacts with the 16S rRNA in the 70S ribosome. This chain is Large ribosomal subunit protein uL2, found in Methylobacterium nodulans (strain LMG 21967 / CNCM I-2342 / ORS 2060).